The following is a 364-amino-acid chain: Ferrochelatase (364 aa).

Residues His213 and Glu294 each coordinate Fe cation.

It belongs to the ferrochelatase family.

It is found in the cytoplasm. The catalysed reaction is heme b + 2 H(+) = protoporphyrin IX + Fe(2+). It functions in the pathway porphyrin-containing compound metabolism; protoheme biosynthesis; protoheme from protoporphyrin-IX: step 1/1. Functionally, catalyzes the ferrous insertion into protoporphyrin IX. The polypeptide is Ferrochelatase (Chromobacterium violaceum (strain ATCC 12472 / DSM 30191 / JCM 1249 / CCUG 213 / NBRC 12614 / NCIMB 9131 / NCTC 9757 / MK)).